The primary structure comprises 252 residues: AA9 family lytic polysaccharide monooxygenase B (252 aa).

An N-terminal signal peptide occupies residues M1 to A20. Positions 21 and 106 each coordinate Cu(2+). Cysteines 72 and 198 form a disulfide. A glycan (N-linked (GlcNAc...) asparagine) is linked at N158. H184 and Q193 together coordinate O2. Cu(2+) is bound at residue Y195. An N-linked (GlcNAc...) asparagine glycan is attached at N237.

This sequence belongs to the polysaccharide monooxygenase AA9 family. Cu(2+) serves as cofactor.

It is found in the secreted. It carries out the reaction [(1-&gt;4)-beta-D-glucosyl]n+m + reduced acceptor + O2 = 4-dehydro-beta-D-glucosyl-[(1-&gt;4)-beta-D-glucosyl]n-1 + [(1-&gt;4)-beta-D-glucosyl]m + acceptor + H2O.. Its function is as follows. Lytic polysaccharide monooxygenase (LPMO) that depolymerizes crystalline and amorphous polysaccharides via the oxidation of scissile alpha- or beta-(1-4)-glycosidic bonds, yielding C1 or C4 oxidation products. Catalysis by LPMOs requires the reduction of the active-site copper from Cu(II) to Cu(I) by a reducing agent and H(2)O(2) or O(2) as a cosubstrate. The synergistic activity of LPMO9B with xylanase Xyl10G or cellulase Cel5B shows efficient bioconversion rates of 56 and 174 percent in pretreated kenaf (Hibiscus cannabinus) and oak, respectively. The chain is AA9 family lytic polysaccharide monooxygenase B from Gloeophyllum trabeum (strain ATCC 11539 / FP-39264 / Madison 617) (Brown rot fungus).